Reading from the N-terminus, the 359-residue chain is Protein RecA (359 aa).

ATP is bound at residue 74–81 (GPESSGKT).

Belongs to the RecA family.

It localises to the cytoplasm. Can catalyze the hydrolysis of ATP in the presence of single-stranded DNA, the ATP-dependent uptake of single-stranded DNA by duplex DNA, and the ATP-dependent hybridization of homologous single-stranded DNAs. It interacts with LexA causing its activation and leading to its autocatalytic cleavage. This is Protein RecA from Anaplasma marginale (strain Florida).